The primary structure comprises 340 residues: Ketol-acid reductoisomerase (NADP(+)) (340 aa).

Residues 1–183 (MAITVYYDKD…GGGRTGIIET (183 aa)) enclose the KARI N-terminal Rossmann domain. Residues 26–29 (FGSQ), R49, S52, S54, and 84–87 (DEIQ) contribute to the NADP(+) site. H109 is a catalytic residue. Residue G135 participates in NADP(+) binding. The 146-residue stretch at 184 to 329 (TFKAETETDL…RNLRAMMPWI (146 aa)) folds into the KARI C-terminal knotted domain. Positions 192, 196, 228, and 232 each coordinate Mg(2+). S253 contacts substrate.

The protein belongs to the ketol-acid reductoisomerase family. It depends on Mg(2+) as a cofactor.

It carries out the reaction (2R)-2,3-dihydroxy-3-methylbutanoate + NADP(+) = (2S)-2-acetolactate + NADPH + H(+). The enzyme catalyses (2R,3R)-2,3-dihydroxy-3-methylpentanoate + NADP(+) = (S)-2-ethyl-2-hydroxy-3-oxobutanoate + NADPH + H(+). It participates in amino-acid biosynthesis; L-isoleucine biosynthesis; L-isoleucine from 2-oxobutanoate: step 2/4. It functions in the pathway amino-acid biosynthesis; L-valine biosynthesis; L-valine from pyruvate: step 2/4. Its function is as follows. Involved in the biosynthesis of branched-chain amino acids (BCAA). Catalyzes an alkyl-migration followed by a ketol-acid reduction of (S)-2-acetolactate (S2AL) to yield (R)-2,3-dihydroxy-isovalerate. In the isomerase reaction, S2AL is rearranged via a Mg-dependent methyl migration to produce 3-hydroxy-3-methyl-2-ketobutyrate (HMKB). In the reductase reaction, this 2-ketoacid undergoes a metal-dependent reduction by NADPH to yield (R)-2,3-dihydroxy-isovalerate. This chain is Ketol-acid reductoisomerase (NADP(+)), found in Campylobacter jejuni subsp. jejuni serotype O:6 (strain 81116 / NCTC 11828).